A 514-amino-acid polypeptide reads, in one-letter code: MKKLKINYLFIGILTLLLAAALWPSIPWFGKTENHVAAIQARGVLRVSTIDSPLTYAVVNGKKYGLDYELAQQFANYLGVKLKITVRQNISQLFDDLDNGNADLLAAGLVYDSARVKKYQPGPMYYSVSQQLVYRVGQYRPRSLATVTENQLTIAPGHVVVNDLQRLKETKFPDLSWKVDDKKGSTTLLEDVINGKLDYTIADSVAISLFQRVHPELAVALDVTDEQPVTWFSRLDDDNTLSAALLDFFNSINEDGSLARIEEKYLGHGDDFDYVDTRSFLRAVDNVLPELEALFKKYAKEIDWRLLAAISYQESHWDPQATSPTGVRGLMMLTKNTAQSLGLTDRTDAEQSISGGARYLEDMMAKVPETVPEDERIWFALAAYNMGYAHMLDARALTVKTKGNPDSWTDVKQRLPLLSQKPYYSKLTYGYARGHEAYAYVENIRKYQISLVGYLQEKEKQEAEAMKLAQDYPAASPEELNKAPFPFISFLSQSSGYLTHSPSLLFTPQKKEEK.

The N-terminal stretch at 1–30 is a signal peptide; that stretch reads MKKLKINYLFIGILTLLLAAALWPSIPWFG. Residues 31–269 are non-LT domain; that stretch reads KTENHVAAIQ…RIEEKYLGHG (239 aa). An LT domain region spans residues 270-514; that stretch reads DDFDYVDTRS…LFTPQKKEEK (245 aa). Residue E314 is part of the active site.

In the N-terminal section; belongs to the bacterial solute-binding protein 3 family. The protein in the C-terminal section; belongs to the transglycosylase Slt family.

It is found in the cell outer membrane. The catalysed reaction is Exolytic cleavage of the (1-&gt;4)-beta-glycosidic linkage between N-acetylmuramic acid (MurNAc) and N-acetylglucosamine (GlcNAc) residues in peptidoglycan, from either the reducing or the non-reducing ends of the peptidoglycan chains, with concomitant formation of a 1,6-anhydrobond in the MurNAc residue.. In terms of biological role, murein-degrading enzyme that degrades murein glycan strands and insoluble, high-molecular weight murein sacculi, with the concomitant formation of a 1,6-anhydromuramoyl product. Lytic transglycosylases (LTs) play an integral role in the metabolism of the peptidoglycan (PG) sacculus. Their lytic action creates space within the PG sacculus to allow for its expansion as well as for the insertion of various structures such as secretion systems and flagella. The polypeptide is Membrane-bound lytic murein transglycosylase F (Salmonella arizonae (strain ATCC BAA-731 / CDC346-86 / RSK2980)).